An 874-amino-acid chain; its full sequence is Trimodular acetylaranotin synthesis protein ataIMG (874 aa).

The aminotransferase ataI stretch occupies residues 1-339 (MANLSGLSNR…DSGLLRASSI (339 aa)). The segment at 20-39 (RFGFQTTQQAKPTESSKTPI) is disordered. Positions 23 to 37 (FQTTQQAKPTESSKT) are enriched in polar residues. Positions 340–668 (SYNSMVKGSS…QERTEAEWRT (329 aa)) are O-methyltransferase ataM. Asp625 is a binding site for S-adenosyl-L-methionine. A glutathione S-transferase ataG region spans residues 669 to 874 (LAGRTGWEIR…VMEMGPQIGH (206 aa)). One can recognise a GST N-terminal domain in the interval 699 to 766 (KPLILAHELE…YLADRFDDGT (68 aa)). A GST C-terminal domain is found at 739-874 (DPETKAEVIV…VMEMGPQIGH (136 aa)).

It in the N-terminal section; belongs to the class-I pyridoxal-phosphate-dependent aminotransferase family. In the 2nd section; belongs to the class I-like SAM-binding methyltransferase superfamily. Cation-independent O-methyltransferase family. This sequence in the C-terminal section; belongs to the GST superfamily. Requires pyridoxal 5'-phosphate as cofactor.

It catalyses the reaction RX + glutathione = an S-substituted glutathione + a halide anion + H(+). The protein operates within mycotoxin biosynthesis. Functionally, trimodular acetylaranotin synthesis protein; part of the gene cluster that mediates the biosynthesis of acetylaranotin, a member of the epipolythiodioxopiperazine (ETP) class of toxins characterized by a disulfide-bridged cyclic dipeptide. The first step of acetylaranotin biosynthesis is performed by the NRPS ataP which produces diketopiperazine cyclo-L-Phe-L-Phe via the condensation of 2 phenylalanines (L-Phe). The ataC domain of ataTC then catalyzes the formation of bishydroxylation of cyclo-L-Phe-L-Phe. The glutathione S-transferase domain ataG in ataIMG further catalyzes the conjugation of two glutathiones to the bishydroxylated intermediate. Next, the dipeptidase ataJ removes the Glu residues. The following step is performed by the carbon sulfur lyase domain ataI of ataIMG which may convert the bis-cysteinyl adduct to yield an epidithiol intermediate. The ataT domain from ataTC then catalyzes the oxidation of the free dithiols, followed by a cyclization step catalyzed by the cytochrome P450 ataF. AtaF probably acts as an epoxidase to promote a dual epoxidation formation at C8 and C9 along with C8' and C9', followed by the spontaneous nucleophilic attack of the amide nitrogens N10 and N10' to yield an intermediate with the pyrrolidine partial structure. The final steps of acetylaranotin biosynthesis involve the acetylation and ring rearrangement of an epitetrathiodiketopiperazine intermediate to produce acetylaranotin. AtaH probably catalyzes the acetylation of epitetrathiodiketopiperazine to produce a diacetate and ataY is responsible for the formation of the dihydrooxepin moiety that converts the diacetate intermediate to acetylaranotin via acetylapoaranotin. Both enzymes could function independently in the absence of the other. The acetylaranotin bis-thiomethyltransferase ataS located outside of acetylaranotin gene cluster is the main thiomethyltransferase responsible for converting acetylaranotin and its related intermediates to their methylated forms. This chain is Trimodular acetylaranotin synthesis protein ataIMG, found in Aspergillus terreus (strain NIH 2624 / FGSC A1156).